We begin with the raw amino-acid sequence, 270 residues long: 3-methyl-2-oxobutanoate hydroxymethyltransferase (270 aa).

Mg(2+)-binding residues include D50 and D89. 3-methyl-2-oxobutanoate is bound by residues 50–51 (DS), D89, and K118. E120 is a Mg(2+) binding site. E187 acts as the Proton acceptor in catalysis.

It belongs to the PanB family. As to quaternary structure, homodecamer; pentamer of dimers. Mg(2+) serves as cofactor.

The protein resides in the cytoplasm. The enzyme catalyses 3-methyl-2-oxobutanoate + (6R)-5,10-methylene-5,6,7,8-tetrahydrofolate + H2O = 2-dehydropantoate + (6S)-5,6,7,8-tetrahydrofolate. It participates in cofactor biosynthesis; (R)-pantothenate biosynthesis; (R)-pantoate from 3-methyl-2-oxobutanoate: step 1/2. Catalyzes the reversible reaction in which hydroxymethyl group from 5,10-methylenetetrahydrofolate is transferred onto alpha-ketoisovalerate to form ketopantoate. This is 3-methyl-2-oxobutanoate hydroxymethyltransferase from Helicobacter acinonychis (strain Sheeba).